A 337-amino-acid chain; its full sequence is Ketol-acid reductoisomerase (NADP(+)) (337 aa).

The region spanning 3–183 (VEVFYDDDAD…GGTRAGAIRT (181 aa)) is the KARI N-terminal Rossmann domain. Residues 26-29 (YGSQ), serine 52, serine 54, and 84-87 (DTAQ) each bind NADP(+). Histidine 109 is a catalytic residue. Glycine 135 contacts NADP(+). Positions 184-329 (TFTEETETDL…SKLRGMMSWV (146 aa)) constitute a KARI C-terminal knotted domain. The Mg(2+) site is built by aspartate 192, glutamate 196, glutamate 228, and glutamate 232. Serine 253 serves as a coordination point for substrate.

The protein belongs to the ketol-acid reductoisomerase family. It depends on Mg(2+) as a cofactor.

It catalyses the reaction (2R)-2,3-dihydroxy-3-methylbutanoate + NADP(+) = (2S)-2-acetolactate + NADPH + H(+). It carries out the reaction (2R,3R)-2,3-dihydroxy-3-methylpentanoate + NADP(+) = (S)-2-ethyl-2-hydroxy-3-oxobutanoate + NADPH + H(+). The protein operates within amino-acid biosynthesis; L-isoleucine biosynthesis; L-isoleucine from 2-oxobutanoate: step 2/4. It functions in the pathway amino-acid biosynthesis; L-valine biosynthesis; L-valine from pyruvate: step 2/4. Involved in the biosynthesis of branched-chain amino acids (BCAA). Catalyzes an alkyl-migration followed by a ketol-acid reduction of (S)-2-acetolactate (S2AL) to yield (R)-2,3-dihydroxy-isovalerate. In the isomerase reaction, S2AL is rearranged via a Mg-dependent methyl migration to produce 3-hydroxy-3-methyl-2-ketobutyrate (HMKB). In the reductase reaction, this 2-ketoacid undergoes a metal-dependent reduction by NADPH to yield (R)-2,3-dihydroxy-isovalerate. The polypeptide is Ketol-acid reductoisomerase (NADP(+)) (Salinispora arenicola (strain CNS-205)).